The following is a 385-amino-acid chain: Putative non-inhibitory serpin-Z11 (385 aa).

The tract at residues 324–348 (GTTAVEAMYSPSSPGYSPGYQPPRP) is RCL.

Belongs to the serpin family.

The chain is Putative non-inhibitory serpin-Z11 from Oryza sativa subsp. japonica (Rice).